The sequence spans 194 residues: Probable GTP-binding protein EngB (194 aa).

The EngB-type G domain occupies 19 to 193 (DCIQICFWGR…VLFIEENIFK (175 aa)). GTP contacts are provided by residues 27 to 34 (GRSNVGKS), 53 to 57 (GRTQF), 70 to 73 (DLPG), 137 to 140 (TKID), and 172 to 174 (VSS). 2 residues coordinate Mg(2+): Ser-34 and Thr-55.

Belongs to the TRAFAC class TrmE-Era-EngA-EngB-Septin-like GTPase superfamily. EngB GTPase family. Requires Mg(2+) as cofactor.

In terms of biological role, necessary for normal cell division and for the maintenance of normal septation. The sequence is that of Probable GTP-binding protein EngB from Mycoplasmopsis agalactiae (strain NCTC 10123 / CIP 59.7 / PG2) (Mycoplasma agalactiae).